Consider the following 177-residue polypeptide: Large ribosomal subunit protein uL6 (177 aa).

Belongs to the universal ribosomal protein uL6 family. As to quaternary structure, part of the 50S ribosomal subunit.

This protein binds to the 23S rRNA, and is important in its secondary structure. It is located near the subunit interface in the base of the L7/L12 stalk, and near the tRNA binding site of the peptidyltransferase center. This chain is Large ribosomal subunit protein uL6, found in Rhodopseudomonas palustris (strain BisB5).